A 294-amino-acid chain; its full sequence is Elongation factor Ts (294 aa).

The segment at 81-84 (TDFV) is involved in Mg(2+) ion dislocation from EF-Tu.

Belongs to the EF-Ts family.

It is found in the cytoplasm. Functionally, associates with the EF-Tu.GDP complex and induces the exchange of GDP to GTP. It remains bound to the aminoacyl-tRNA.EF-Tu.GTP complex up to the GTP hydrolysis stage on the ribosome. This Hydrogenovibrio crunogenus (strain DSM 25203 / XCL-2) (Thiomicrospira crunogena) protein is Elongation factor Ts.